The following is a 489-amino-acid chain: Rhamnulokinase (489 aa).

13 to 17 provides a ligand contact to ATP; it reads ASSGR. C68 and C222 are disulfide-bonded. Substrate-binding positions include G83 and 236 to 238; that span reads HDT. Catalysis depends on D237, which acts as the Proton acceptor. T259 contributes to the ATP binding site. N296 contributes to the substrate binding site. Q304 contributes to the ATP binding site. C353 and C370 are oxidised to a cystine. G402 is a binding site for ATP. C413 and C417 are oxidised to a cystine.

The protein belongs to the rhamnulokinase family. Monomer. It depends on Mg(2+) as a cofactor.

The catalysed reaction is L-rhamnulose + ATP = L-rhamnulose 1-phosphate + ADP + H(+). The protein operates within carbohydrate degradation; L-rhamnose degradation; glycerone phosphate from L-rhamnose: step 2/3. Functionally, involved in the catabolism of L-rhamnose (6-deoxy-L-mannose). Catalyzes the transfer of the gamma-phosphate group from ATP to the 1-hydroxyl group of L-rhamnulose to yield L-rhamnulose 1-phosphate. This is Rhamnulokinase from Escherichia coli O127:H6 (strain E2348/69 / EPEC).